The chain runs to 385 residues: Polyketide synthase 3 (385 aa).

Residue Cys157 is part of the active site.

The protein belongs to the thiolase-like superfamily. Chalcone/stilbene synthases family. In terms of tissue distribution, expressed in male and female flowers, and seedlings.

It localises to the cytoplasm. In terms of biological role, polyketide synthase responsible for the biosynthesis of secondary metabolites. The protein is Polyketide synthase 3 (PKSF3) of Cannabis sativa (Hemp).